We begin with the raw amino-acid sequence, 292 residues long: MEMO1 family protein PF1638 (292 aa).

This sequence belongs to the MEMO1 family.

The polypeptide is MEMO1 family protein PF1638 (Pyrococcus furiosus (strain ATCC 43587 / DSM 3638 / JCM 8422 / Vc1)).